Here is a 352-residue protein sequence, read N- to C-terminus: Putative GATA transcription factor 22 (352 aa).

The tract at residues 27-53 (SLHHHLQQQQQQQQHFHHQASSNPSSL) is disordered. A compositionally biased stretch (low complexity) spans 33–53 (QQQQQQQQHFHHQASSNPSSL). Positions 112–119 (PKKETRLK) match the Nuclear localization signal motif. The interval 163-189 (AIITTSDSSKQHTNNDQSSNLSNSERQ) is disordered. The span at 165–189 (ITTSDSSKQHTNNDQSSNLSNSERQ) shows a compositional bias: polar residues. A GATA-type zinc finger spans residues 195–249 (DCVIRICSDCNTTKTPLWRSGPRGPKSLCNACGIRQRKARRAAMATATATAVSGV).

It belongs to the type IV zinc-finger family. Class B subfamily. Forms heterodimers with GATA18. Expressed predominantly in leaves, and barely in stems, flowers and siliques.

Its subcellular location is the nucleus. Its function is as follows. Transcriptional regulator that specifically binds 5'-GATA-3' or 5'-GAT-3' motifs within gene promoters. Involved in the modulation of chloroplast development, growth and division in a cytokinin-dependent manner. Repressor of the gibberellic acid (GA) signaling pathway that regulates flowering and modulates greening, in a SOC1-dependent manner. Prevents the accumulation of SOC1 during flowering. Promotes chlorophyll biosynthesis throughout the plant, by regulating chlorophyll biosynthetic genes (e.g. HEMA1 and GUN4) and chloroplast localized glutamate synthase (e.g. GLU1). Involved in the regulation of sugar-sensing genes (e.g. HXK1, HXK2, STP13 and PLT6). Regulator of germination, senescence, elongation growth and flowering time. Influences also leaf starch content. This is Putative GATA transcription factor 22 from Arabidopsis thaliana (Mouse-ear cress).